A 257-amino-acid polypeptide reads, in one-letter code: NH(3)-dependent NAD(+) synthetase (257 aa).

28–35 contributes to the ATP binding site; sequence GISGGVDS. Position 34 (Asp-34) interacts with Mg(2+). Arg-109 is a deamido-NAD(+) binding site. An ATP-binding site is contributed by Thr-129. Position 134 (Glu-134) interacts with Mg(2+). Deamido-NAD(+) contacts are provided by Lys-142 and Asp-149. 2 residues coordinate ATP: Lys-158 and Ser-180. 240–241 is a binding site for deamido-NAD(+); it reads HK.

This sequence belongs to the NAD synthetase family. Homodimer.

The enzyme catalyses deamido-NAD(+) + NH4(+) + ATP = AMP + diphosphate + NAD(+) + H(+). The protein operates within cofactor biosynthesis; NAD(+) biosynthesis; NAD(+) from deamido-NAD(+) (ammonia route): step 1/1. Its function is as follows. Catalyzes the ATP-dependent amidation of deamido-NAD to form NAD. Uses ammonia as a nitrogen source. The polypeptide is NH(3)-dependent NAD(+) synthetase (Pyrococcus horikoshii (strain ATCC 700860 / DSM 12428 / JCM 9974 / NBRC 100139 / OT-3)).